The sequence spans 303 residues: Methyltransferase ktnA (303 aa).

Belongs to the class I-like SAM-binding methyltransferase superfamily. It depends on S-adenosyl-L-methionine as a cofactor.

Its function is as follows. Non-reducing polyketide synthase; part of the gene cluster that mediates the biosynthesis of the bicoumarin kotanin. The non-reducing polyketide synthase ktnS first catalyzes the formation of the pentaketidic 4,7-dihydroxy-5-methylcoumarin from acetyl coenzyme A and 4 malonyl coenzyme A molecules. Further O-methylation by ktnB leads to the formation of 7-demethylsiderin. Then, an oxidative phenol coupling catalyzed by the cytochrome P450 monooxygenase ktnC forms the 8,8'-dimer P-orlandin via dimerization the monomeric precursor, 7-demethylsiderin. P-orlandin is subsequently O-methylated in a stepwise fashion to demethylkotanin and kotanin. The function of ktnA within the pathway has not been determined yet. In Aspergillus niger (strain ATCC MYA-4892 / CBS 513.88 / FGSC A1513), this protein is Methyltransferase ktnA.